The primary structure comprises 1411 residues: ATP-dependent permease PDR11 (1411 aa).

Topologically, residues 2–388 (SLSKYFNPIP…IGDRNYLISQ (387 aa)) are cytoplasmic. In terms of domain architecture, ABC transporter 1 spans 31 to 273 (VQNDEESASE…FHDTLQIKKN (243 aa)). The chain crosses the membrane as a helical span at residues 389–409 (FVSVVVQSLVIGSLFYNIPLT). Over 410-418 (TIGSFSRGS) the chain is Extracellular. A helical transmembrane segment spans residues 419–439 (LTFFSILFFTFLSLADMPASF). Residues 440-471 (QRQPVVRKHVQLHFYYNWVETLATNFFDCCSK) lie on the Cytoplasmic side of the membrane. The helical transmembrane segment at 472–492 (FILVVIFTIILYFLAHLQYNA) threads the bilayer. The Extracellular portion of the chain corresponds to 493-494 (AR). A helical transmembrane segment spans residues 495-515 (FFIFLLFLSVYNFCMVSLFAL). At 516–524 (TALIAPTLS) the chain is on the cytoplasmic side. A helical membrane pass occupies residues 525–545 (MANLLAGILLLAIAMYASYVI). At 546 to 636 (YMKDMHPWFI…YTYHHVWRNF (91 aa)) the chain is on the extracellular side. Residue asparagine 595 is glycosylated (N-linked (GlcNAc...) asparagine). A helical transmembrane segment spans residues 637–657 (GIIIGFLCFFLFCSLLAAEYI). Residues 658–1090 (TPLFTRENLL…QYICTKRDMT (433 aa)) are Cytoplasmic-facing. Residues 751 to 979 (ISWKNINYTI…FVAHDRRLTF (229 aa)) enclose the ABC transporter 2 domain. 782 to 789 (GESGAGKT) lines the ATP pocket. Residues 1091–1111 (YVFAKYALNAGAGLFIGFSFW) traverse the membrane as a helical segment. Topologically, residues 1112–1117 (RTKHNI) are extracellular. Residues 1118-1138 (NGLQDAIFLCFMMLCVSSPLI) form a helical membrane-spanning segment. Over 1139-1175 (NQVQDKALQSKEVYIAREARSNTYHWTVLLIAQTIVE) the chain is Cytoplasmic. The helical transmembrane segment at 1176–1196 (LPLAISSSTLFFLCCYFCCGF) threads the bilayer. Topologically, residues 1197–1204 (ETSARVAG) are extracellular. Residues 1205 to 1225 (VFYLNYILFSMYYLSFGLWLL) traverse the membrane as a helical segment. Topologically, residues 1226–1230 (YSAPD) are cytoplasmic. The chain crosses the membrane as a helical span at residues 1231-1251 (LQTAAVFVAFLYSFTASFCGV). Residues 1252-1355 (MQPYSLFPRF…NMSYHHRWRN (104 aa)) lie on the Extracellular side of the membrane. N-linked (GlcNAc...) asparagine glycosylation is found at asparagine 1289, asparagine 1324, and asparagine 1346. The chain crosses the membrane as a helical span at residues 1356 to 1376 (FGFEWVFVCFNIAAMFVGFYL). Over 1377 to 1411 (TYIKKIWPSVIDGIKKCIPSMRRSKTSHNPNEQSV) the chain is Cytoplasmic.

Belongs to the ABC transporter superfamily. ABCG family. PDR (TC 3.A.1.205) subfamily.

It is found in the membrane. Functionally, transporter involved in the uptake of sterol. This chain is ATP-dependent permease PDR11 (PDR11), found in Saccharomyces cerevisiae (strain ATCC 204508 / S288c) (Baker's yeast).